A 227-amino-acid chain; its full sequence is Ribosomal RNA large subunit methyltransferase E (227 aa).

S-adenosyl-L-methionine is bound by residues G78, W80, D103, D119, and D143. K183 acts as the Proton acceptor in catalysis.

It belongs to the class I-like SAM-binding methyltransferase superfamily. RNA methyltransferase RlmE family.

It localises to the cytoplasm. The enzyme catalyses uridine(2552) in 23S rRNA + S-adenosyl-L-methionine = 2'-O-methyluridine(2552) in 23S rRNA + S-adenosyl-L-homocysteine + H(+). Its function is as follows. Specifically methylates the uridine in position 2552 of 23S rRNA at the 2'-O position of the ribose in the fully assembled 50S ribosomal subunit. This is Ribosomal RNA large subunit methyltransferase E from Rickettsia bellii (strain RML369-C).